The sequence spans 350 residues: Protein RecA (350 aa).

An ATP-binding site is contributed by 67–74; the sequence is GPESSGKT.

The protein belongs to the RecA family.

Its subcellular location is the cytoplasm. Functionally, can catalyze the hydrolysis of ATP in the presence of single-stranded DNA, the ATP-dependent uptake of single-stranded DNA by duplex DNA, and the ATP-dependent hybridization of homologous single-stranded DNAs. It interacts with LexA causing its activation and leading to its autocatalytic cleavage. The sequence is that of Protein RecA from Wolinella succinogenes (strain ATCC 29543 / DSM 1740 / CCUG 13145 / JCM 31913 / LMG 7466 / NCTC 11488 / FDC 602W) (Vibrio succinogenes).